The sequence spans 417 residues: Lactose permease (417 aa).

Met-1 bears the N-formylmethionine; partial mark. The Cytoplasmic portion of the chain corresponds to 1–7 (MYYLKNT). Residues 8–34 (NFWMFGLFFFFYFFIMGAYFPFFPIWL) traverse the membrane as a helical segment. Topologically, residues 35–41 (HDINHIS) are periplasmic. Residues 42–70 (KSDTGIIFAAISLFSLLFQPLFGLLSDKL) form a helical membrane-spanning segment. The Cytoplasmic segment spans residues 71-74 (GLRK). The chain crosses the membrane as a helical span at residues 75–100 (YLLWIITGMLVMFAPFFIFIFGPLLQ). The Periplasmic portion of the chain corresponds to 101–104 (YNIL). Residues 105 to 129 (VGSIVGGIYLGFCFNAGAPAVEAFI) traverse the membrane as a helical segment. Residues 130-140 (EKVSRRSNFEF) lie on the Cytoplasmic side of the membrane. Residues 141-163 (GRARMFGCVGWALCASIVGIMFT) form a helical membrane-spanning segment. The Periplasmic portion of the chain corresponds to 164–166 (INN). The helical transmembrane segment at 167-186 (QFVFWLGSGCALILAVLLFF) threads the bilayer. Residues 187 to 220 (AKTDAPSSATVANAVGANHSAFSLKLALELFRQP) lie on the Cytoplasmic side of the membrane. Residues 221 to 249 (KLWFLSLYVIGVSCTYDVFDQQFANFFTS) form a helical membrane-spanning segment. Over 250-253 (FFAT) the chain is Periplasmic. Residues 254-278 (GEQGTRVFGYVTTMGELLNASIMFF) traverse the membrane as a helical segment. Topologically, residues 279-288 (APLIINRIGG) are cytoplasmic. The helical transmembrane segment at 289–308 (KNALLLAGTIMSVRIIGSSF) threads the bilayer. At 309-311 (ATS) the chain is on the periplasmic side. Residues 312-334 (ALEVVILKTLHMFEVPFLLVGCF) traverse the membrane as a helical segment. The Cytoplasmic portion of the chain corresponds to 335-346 (KYITSQFEVRFS). Residues 347 to 374 (ATIYLVCFCFFKQLAMIFMSVLAGNMYE) traverse the membrane as a helical segment. The Periplasmic portion of the chain corresponds to 375–377 (SIG). A helical transmembrane segment spans residues 378 to 398 (FQGAYLVLGLVALGFTLISVF). Topologically, residues 399 to 417 (TLSGPGPLSLLRRQVNEVA) are cytoplasmic.

As to quaternary structure, monomer.

Its subcellular location is the cell inner membrane. The enzyme catalyses lactose(in) + H(+)(in) = lactose(out) + H(+)(out). It carries out the reaction melibiose(in) + H(+)(in) = melibiose(out) + H(+)(out). Its activity is regulated as follows. Inhibited by the proton ionophore carbonyl cyanide m-chlorophenylhydrazone (CCCP). In terms of biological role, responsible for transport of beta-galactosides into the cell, with the concomitant import of a proton (symport system). Can transport lactose, melibiose, the synthetic disaccharide lactulose or the analog methyl-1-thio-beta,D-galactopyranoside (TMG), but not sucrose or fructose. The substrate specificity is directed toward the galactopyranosyl moiety of the substrate. This chain is Lactose permease, found in Escherichia coli (strain K12).